We begin with the raw amino-acid sequence, 338 residues long: Ketol-acid reductoisomerase (NADP(+)) (338 aa).

Residues Met-1–Thr-181 enclose the KARI N-terminal Rossmann domain. NADP(+) is bound by residues Tyr-24–Gln-27, Arg-47, and Ser-52. His-107 is a catalytic residue. Gly-133 lines the NADP(+) pocket. Residues Asn-182–Ile-327 enclose the KARI C-terminal knotted domain. Residues Asp-190, Glu-194, Glu-226, and Glu-230 each coordinate Mg(2+). Ser-251 provides a ligand contact to substrate.

The protein belongs to the ketol-acid reductoisomerase family. Mg(2+) is required as a cofactor.

It carries out the reaction (2R)-2,3-dihydroxy-3-methylbutanoate + NADP(+) = (2S)-2-acetolactate + NADPH + H(+). It catalyses the reaction (2R,3R)-2,3-dihydroxy-3-methylpentanoate + NADP(+) = (S)-2-ethyl-2-hydroxy-3-oxobutanoate + NADPH + H(+). Its pathway is amino-acid biosynthesis; L-isoleucine biosynthesis; L-isoleucine from 2-oxobutanoate: step 2/4. It participates in amino-acid biosynthesis; L-valine biosynthesis; L-valine from pyruvate: step 2/4. In terms of biological role, involved in the biosynthesis of branched-chain amino acids (BCAA). Catalyzes an alkyl-migration followed by a ketol-acid reduction of (S)-2-acetolactate (S2AL) to yield (R)-2,3-dihydroxy-isovalerate. In the isomerase reaction, S2AL is rearranged via a Mg-dependent methyl migration to produce 3-hydroxy-3-methyl-2-ketobutyrate (HMKB). In the reductase reaction, this 2-ketoacid undergoes a metal-dependent reduction by NADPH to yield (R)-2,3-dihydroxy-isovalerate. This chain is Ketol-acid reductoisomerase (NADP(+)), found in Bordetella bronchiseptica (strain ATCC BAA-588 / NCTC 13252 / RB50) (Alcaligenes bronchisepticus).